A 318-amino-acid chain; its full sequence is Pyrimidine-specific ribonucleoside hydrolase RihA (318 aa).

The active site involves His-240.

It belongs to the IUNH family. RihA subfamily.

Its function is as follows. Hydrolyzes cytidine or uridine to ribose and cytosine or uracil, respectively. The sequence is that of Pyrimidine-specific ribonucleoside hydrolase RihA from Shewanella oneidensis (strain ATCC 700550 / JCM 31522 / CIP 106686 / LMG 19005 / NCIMB 14063 / MR-1).